We begin with the raw amino-acid sequence, 506 residues long: Histidine--tRNA ligase, mitochondrial (506 aa).

Residues 1–33 (MHLLGLLPRRAWASLLSQLLRPPWASCTGAVRC) constitute a mitochondrion transit peptide. Residue Ser67 is modified to Phosphoserine. Residues 131 to 133 (DLT), Arg158, Gln174, Asp178, Arg327, and 331 to 332 (YY) each bind L-histidine. Position 444 is an N6-acetyllysine (Lys444).

This sequence belongs to the class-II aminoacyl-tRNA synthetase family. In terms of assembly, homodimer.

The protein resides in the mitochondrion. The enzyme catalyses tRNA(His) + L-histidine + ATP = L-histidyl-tRNA(His) + AMP + diphosphate + H(+). Mitochondrial aminoacyl-tRNA synthetase that catalyzes the ATP-dependent ligation of histidine to the 3'-end of its cognate tRNA, via the formation of an aminoacyl-adenylate intermediate (His-AMP). This chain is Histidine--tRNA ligase, mitochondrial (HARS2), found in Pongo abelii (Sumatran orangutan).